The following is a 359-amino-acid chain: Mannose-1-phosphate guanylyltransferase catalytic subunit beta (359 aa).

Positions 2-221 are substrate-binding domain; it reads KALILVGGFG…EGFWMDVGQP (220 aa). GDP-alpha-D-mannose is bound at residue Asp-109. Asp-109 serves as a coordination point for Mg(2+). Residue Lys-161 is part of the active site. Residue Asp-217 coordinates GDP-alpha-D-mannose. Mg(2+) is bound at residue Asp-217. A hexapeptide repeat domain region spans residues 244-359; it reads ATGNGIIGPV…SSIPEPEIIM (116 aa).

It belongs to the transferase hexapeptide repeat family. As to quaternary structure, component of the GMPPA-GMPPB mannose-1-phosphate guanylyltransferase complex composed of 4 GMPPA subunits and 8 gmppB subunits; the complex is organized into three layers, a central layer made up of 2 gmppA dimers sandwiched between two layers each made up of 2 gmppB dimers. gmppB catalytic activity is reduced when part of the complex and binding of GDP-alpha-D-Mannose by gmppA induces allosteric feedback inhibition of gmppB. It depends on Mg(2+) as a cofactor.

It carries out the reaction alpha-D-mannose 1-phosphate + GTP + H(+) = GDP-alpha-D-mannose + diphosphate. The protein operates within nucleotide-sugar biosynthesis; GDP-alpha-D-mannose biosynthesis; GDP-alpha-D-mannose from alpha-D-mannose 1-phosphate (GTP route): step 1/1. With respect to regulation, enzyme activity is reduced by incorporation into the GMPPA-GMPPB mannose-1-phosphate guanylyltransferase complex. Allosterically inhibited, when part of the GMPPA-GMPPB complex, by GDP-alpha-D-mannose binding to GMPPA. Its function is as follows. Catalytic subunit of the GMPPA-GMPPB mannose-1-phosphate guanylyltransferase complex. Catalyzes the formation of GDP-mannose, an essential precursor of glycan moieties of glycoproteins and glycolipids. Can catalyze the reverse reaction in vitro. Together with GMPPA regulates GDP-alpha-D-mannose levels. The sequence is that of Mannose-1-phosphate guanylyltransferase catalytic subunit beta (gmppB) from Dictyostelium discoideum (Social amoeba).